A 281-amino-acid polypeptide reads, in one-letter code: Bifunctional protein FolD (281 aa).

NADP(+) contacts are provided by residues 165 to 167, Thr192, and Val233; that span reads GRG.

The protein belongs to the tetrahydrofolate dehydrogenase/cyclohydrolase family. Homodimer.

It catalyses the reaction (6R)-5,10-methylene-5,6,7,8-tetrahydrofolate + NADP(+) = (6R)-5,10-methenyltetrahydrofolate + NADPH. The catalysed reaction is (6R)-5,10-methenyltetrahydrofolate + H2O = (6R)-10-formyltetrahydrofolate + H(+). Its pathway is one-carbon metabolism; tetrahydrofolate interconversion. Functionally, catalyzes the oxidation of 5,10-methylenetetrahydrofolate to 5,10-methenyltetrahydrofolate and then the hydrolysis of 5,10-methenyltetrahydrofolate to 10-formyltetrahydrofolate. The chain is Bifunctional protein FolD from Mycobacterium ulcerans (strain Agy99).